Reading from the N-terminus, the 356-residue chain is MANIDINKLKAIENAMGQIEKQFGKGSVMKLGENSVLNIDAISTGCLDLDIALGIGGVPKGRIVEIYGPESSGKTTIALHIAAEAQKKGGAVGFIDAEHALDPSYARNLGVDTENLIVSQPDTGEQGLEIAEALVRSGAIDVIIVDSVAALVPKAEIEGEMGDSHIGLQARLMSQALRKLAGTISKTNCIAIFINQLREKVGVMFGSPETTTGGRALKFYASVRLDVRRIDSIKQGDGIVGNRTRIKVTKNKVAPPFKQAEFDIMYNEGISRQGNIVDVGVKEEIVQKSGAWFSYGDIRLGQGRENAKQYLKENPEVALDIENQIREKHNLPLMDAVIKETAQEVNGKENKEQSDK.

68–75 (GPESSGKT) serves as a coordination point for ATP.

This sequence belongs to the RecA family.

The protein localises to the cytoplasm. Functionally, can catalyze the hydrolysis of ATP in the presence of single-stranded DNA, the ATP-dependent uptake of single-stranded DNA by duplex DNA, and the ATP-dependent hybridization of homologous single-stranded DNAs. It interacts with LexA causing its activation and leading to its autocatalytic cleavage. This is Protein RecA from Clostridium botulinum (strain Eklund 17B / Type B).